The following is a 209-amino-acid chain: Orotate phosphoribosyltransferase (209 aa).

5-phospho-alpha-D-ribose 1-diphosphate is bound by residues arginine 96, lysine 100, histidine 102, and 122–130; that span reads EDLISTGGS. Serine 126 contacts orotate.

This sequence belongs to the purine/pyrimidine phosphoribosyltransferase family. PyrE subfamily. In terms of assembly, homodimer. Mg(2+) is required as a cofactor.

It carries out the reaction orotidine 5'-phosphate + diphosphate = orotate + 5-phospho-alpha-D-ribose 1-diphosphate. The protein operates within pyrimidine metabolism; UMP biosynthesis via de novo pathway; UMP from orotate: step 1/2. Functionally, catalyzes the transfer of a ribosyl phosphate group from 5-phosphoribose 1-diphosphate to orotate, leading to the formation of orotidine monophosphate (OMP). This chain is Orotate phosphoribosyltransferase, found in Lactococcus lactis subsp. cremoris (strain MG1363).